A 185-amino-acid polypeptide reads, in one-letter code: ATP-dependent protease subunit HslV (185 aa).

The active site involves T12. Residues A168, C171, and T174 each coordinate Na(+).

The protein belongs to the peptidase T1B family. HslV subfamily. In terms of assembly, a double ring-shaped homohexamer of HslV is capped on each side by a ring-shaped HslU homohexamer. The assembly of the HslU/HslV complex is dependent on binding of ATP.

The protein resides in the cytoplasm. The enzyme catalyses ATP-dependent cleavage of peptide bonds with broad specificity.. With respect to regulation, allosterically activated by HslU binding. Functionally, protease subunit of a proteasome-like degradation complex believed to be a general protein degrading machinery. This chain is ATP-dependent protease subunit HslV, found in Cereibacter sphaeroides (strain ATCC 17025 / ATH 2.4.3) (Rhodobacter sphaeroides).